The chain runs to 60 residues: Large ribosomal subunit protein bL32 (60 aa).

Positions 1-22 (MAVPKKKTSKSRRDMRRSHHAL) are enriched in basic residues. Residues 1 to 27 (MAVPKKKTSKSRRDMRRSHHALKGSAY) are disordered.

It belongs to the bacterial ribosomal protein bL32 family.

In Rhodospirillum centenum (strain ATCC 51521 / SW), this protein is Large ribosomal subunit protein bL32.